Here is a 140-residue protein sequence, read N- to C-terminus: uncharacterized protein (140 aa).

2 helical membrane-spanning segments follow: residues 33 to 53 (LLYV…KYYF) and 59 to 79 (SLLF…FMGF). Basic and acidic residues predominate over residues 89-104 (EAEPDYRKKQESKNQD). Residues 89 to 140 (EAEPDYRKKQESKNQDFLKSQSNEPLEYASSSAVELEKEKNTREGLTILESS) are disordered. Residues 105–121 (FLKSQSNEPLEYASSSA) are compositionally biased toward polar residues.

It is found in the membrane. This is an uncharacterized protein from Schizosaccharomyces pombe (strain 972 / ATCC 24843) (Fission yeast).